The sequence spans 120 residues: Large ribosomal subunit protein uL18 (120 aa).

It belongs to the universal ribosomal protein uL18 family. Part of the 50S ribosomal subunit; part of the 5S rRNA/L5/L18/L25 subcomplex. Contacts the 5S and 23S rRNAs.

This is one of the proteins that bind and probably mediate the attachment of the 5S RNA into the large ribosomal subunit, where it forms part of the central protuberance. This chain is Large ribosomal subunit protein uL18, found in Bacillus cereus (strain G9842).